Here is a 249-residue protein sequence, read N- to C-terminus: Undecaprenyl-diphosphatase (249 aa).

A run of 8 helical transmembrane segments spans residues 11 to 31 (GLTE…TAIF), 35 to 55 (PDVG…LIFV), 80 to 100 (LVLS…FIES), 101 to 121 (VFSS…LMLL), 135 to 155 (IPYL…LPGI), 180 to 200 (FLMS…KVAF), 202 to 222 (TEQI…LYLV), and 226 to 246 (VIGG…FFVL).

It belongs to the UppP family.

Its subcellular location is the cell membrane. It carries out the reaction di-trans,octa-cis-undecaprenyl diphosphate + H2O = di-trans,octa-cis-undecaprenyl phosphate + phosphate + H(+). Catalyzes the dephosphorylation of undecaprenyl diphosphate (UPP). In Methanococcus maripaludis (strain C6 / ATCC BAA-1332), this protein is Undecaprenyl-diphosphatase.